A 285-amino-acid polypeptide reads, in one-letter code: UPF0354 protein SACOL1793 (285 aa).

It belongs to the UPF0354 family.

This chain is UPF0354 protein SACOL1793, found in Staphylococcus aureus (strain COL).